Consider the following 542-residue polypeptide: Apolipoprotein N-acyltransferase (542 aa).

6 consecutive transmembrane segments (helical) span residues 26-46 (ASVI…LSLV), 54-74 (IWCL…SWML), 89-109 (LLIS…VLCF), 113-133 (YWGA…VRYY), 163-183 (WAGQ…VLVF), and 187-207 (FSYG…GTYY). The 280-residue stretch at 220-499 (LRVAIVQPGY…PDVLQVSVPV (280 aa)) folds into the CN hydrolase domain. E264 functions as the Proton acceptor in the catalytic mechanism. K349 is a catalytic residue. Catalysis depends on C404, which acts as the Nucleophile. A helical membrane pass occupies residues 509-529 (FGDAPLLFVAVSSVLGVVGYF).

It belongs to the CN hydrolase family. Apolipoprotein N-acyltransferase subfamily.

The protein localises to the cell inner membrane. The enzyme catalyses N-terminal S-1,2-diacyl-sn-glyceryl-L-cysteinyl-[lipoprotein] + a glycerophospholipid = N-acyl-S-1,2-diacyl-sn-glyceryl-L-cysteinyl-[lipoprotein] + a 2-acyl-sn-glycero-3-phospholipid + H(+). It participates in protein modification; lipoprotein biosynthesis (N-acyl transfer). In terms of biological role, catalyzes the phospholipid dependent N-acylation of the N-terminal cysteine of apolipoprotein, the last step in lipoprotein maturation. This is Apolipoprotein N-acyltransferase from Chlamydia muridarum (strain MoPn / Nigg).